Reading from the N-terminus, the 385-residue chain is ATP phosphoribosyltransferase regulatory subunit (385 aa).

The protein belongs to the class-II aminoacyl-tRNA synthetase family. HisZ subfamily. In terms of assembly, heteromultimer composed of HisG and HisZ subunits.

It is found in the cytoplasm. Its pathway is amino-acid biosynthesis; L-histidine biosynthesis; L-histidine from 5-phospho-alpha-D-ribose 1-diphosphate: step 1/9. Required for the first step of histidine biosynthesis. May allow the feedback regulation of ATP phosphoribosyltransferase activity by histidine. This Laribacter hongkongensis (strain HLHK9) protein is ATP phosphoribosyltransferase regulatory subunit.